The sequence spans 109 residues: Iron-sulfur assembly protein IscA-like 3, mitochondrial (109 aa).

Residues 1 to 18 (MRKQVLALSDTAAARIRQ) constitute a mitochondrion transit peptide. 3 residues coordinate Fe cation: C37, C100, and C102.

It belongs to the HesB/IscA family. In terms of assembly, homodimer; may form tetramers and higher multimers. The cofactor is Fe cation.

The protein resides in the mitochondrion. Involved in the assembly of mitochondrial iron-sulfur proteins. Probably involved in the binding of an intermediate of Fe/S cluster assembly. In Arabidopsis thaliana (Mouse-ear cress), this protein is Iron-sulfur assembly protein IscA-like 3, mitochondrial.